A 140-amino-acid chain; its full sequence is UPF0179 protein Msp_0996 (140 aa).

The protein belongs to the UPF0179 family.

The chain is UPF0179 protein Msp_0996 from Methanosphaera stadtmanae (strain ATCC 43021 / DSM 3091 / JCM 11832 / MCB-3).